The following is a 306-amino-acid chain: Grixazone synthase (306 aa).

Cu(2+)-binding residues include H39, H58, H67, H222, H226, and H248.

This sequence belongs to the tyrosinase family. The cofactor is Cu(2+).

The enzyme catalyses 2 3-amino-4-hydroxybenzoate + N-acetyl-L-cysteine + 2 O2 + H(+) = grixazone B + CO2 + 4 H2O. The catalysed reaction is 2 3-amino-4-hydroxybenzaldehyde + N-acetyl-L-cysteine + 2 O2 = grixazone A + formate + 3 H2O + H(+). It carries out the reaction 4 2-aminophenol + 3 O2 = 2 2-aminophenoxazin-3-one + 6 H2O. With respect to regulation, inhibited by 3-amino-4-hydroxybenzensulfonic acid, 4-hydroxy-3-nitrobenzaldehyde, L-tyrosine, p-hydroxybenzaldehyde. Activated by the copper chaperone GriE. Functionally, involved in the biosynthesis of the parasiticide antibiotic grixazone. Catalyzes the oxidation of 3-amino-4-hydroxybenzoate (3,4-AHBOA) to yield the corresponding quinone imine which is then non-enzymatically conjugated with the thiol group of N-acetylcysteine. The resultant compound is oxidized to its quinone imine enzymatically and is then dimerized non-enzymatically with another quinone imine oxidized by GriF to yield grixazone B. 3-amino-4-hydroxybenzaldehyde (3,4-AHBAL) can also be used as substrate to yield grixazone A. In the grixazone biosynthetic pathway, it can also function as an o-aminophenol oxidase that catalyzes the formation of the phenoxazinone chromophore from alpha-aminophenol. It can also use 2-amino-4-methylphenol, and to a lesser extent, 3,4-dihydroxybenzaldehyde, catechol and 3,4-dihydroxy-L-phenylalanine (L-DOPA) as substrates. In contrast to tyrosinases, it does not display monophenolase activity. The polypeptide is Grixazone synthase (Streptomyces griseus subsp. griseus (strain JCM 4626 / CBS 651.72 / NBRC 13350 / KCC S-0626 / ISP 5235)).